The following is a 78-amino-acid chain: Exodeoxyribonuclease 7 small subunit (78 aa).

It belongs to the XseB family. Heterooligomer composed of large and small subunits.

The protein localises to the cytoplasm. It carries out the reaction Exonucleolytic cleavage in either 5'- to 3'- or 3'- to 5'-direction to yield nucleoside 5'-phosphates.. Functionally, bidirectionally degrades single-stranded DNA into large acid-insoluble oligonucleotides, which are then degraded further into small acid-soluble oligonucleotides. This Actinobacillus succinogenes (strain ATCC 55618 / DSM 22257 / CCUG 43843 / 130Z) protein is Exodeoxyribonuclease 7 small subunit.